The chain runs to 1001 residues: Protein MEI2-like 4 (1001 aa).

A disordered region spans residues 100-120 (HANLPPSPWRPDQETGRQTDS). 2 RRM domains span residues 275–348 (RTLF…YSIP) and 360–433 (GTIV…TSRL). Disordered stretches follow at residues 767-815 (GGPS…KKQY) and 941-1001 (FHSD…PAKD). The segment covering 793–803 (PGERMRSRRND) has biased composition (basic and acidic residues). The span at 978–994 (DISITSVNCDTSTNGVD) shows a compositional bias: polar residues.

Its function is as follows. Probable RNA-binding protein that may play a role in growth regulation. This is Protein MEI2-like 4 (ML4) from Oryza sativa subsp. japonica (Rice).